A 278-amino-acid chain; its full sequence is uncharacterized protein (278 aa).

Helical transmembrane passes span 1–21 (MLEI…GIAY), 30–50 (AFTA…PLAL), 56–76 (VVID…SFYI), 92–112 (IALP…TVIY), 116–136 (LSLN…IIYG), 146–166 (LFYA…LDFL), 170–190 (LPVS…LSFT), 209–229 (GIFL…SSSW), 230–250 (NVVQ…AIFL), and 258–278 (LVAG…PPLQ). EamA domains are found at residues 12–136 (ICWA…IIYG) and 154–274 (FSWA…LLLL).

It belongs to the EamA transporter family.

It localises to the cell membrane. This is an uncharacterized protein from Archaeoglobus fulgidus (strain ATCC 49558 / DSM 4304 / JCM 9628 / NBRC 100126 / VC-16).